The primary structure comprises 730 residues: Polyphosphate kinase (730 aa).

Residues 1 to 21 (MMRHDRNVTEIDAETRPDENL) show a composition bias toward basic and acidic residues. Positions 1–39 (MMRHDRNVTEIDAETRPDENLWHSGDSAVGAPPAATPAA) are disordered. An ATP-binding site is contributed by Asn86. 2 residues coordinate Mg(2+): Arg423 and Arg453. His483 (phosphohistidine intermediate) is an active-site residue. 3 residues coordinate ATP: Tyr516, Arg612, and His640.

It belongs to the polyphosphate kinase 1 (PPK1) family. Mg(2+) serves as cofactor. Post-translationally, an intermediate of this reaction is the autophosphorylated ppk in which a phosphate is covalently linked to a histidine residue through a N-P bond.

The catalysed reaction is [phosphate](n) + ATP = [phosphate](n+1) + ADP. Its function is as follows. Catalyzes the reversible transfer of the terminal phosphate of ATP to form a long-chain polyphosphate (polyP). The protein is Polyphosphate kinase of Mycobacterium avium (strain 104).